The sequence spans 1368 residues: MARQMTSSQFHKSKTLDNKYMLGDEIGKGAYGRVYKGLDLENGDFVAIKQVSLENIVQEDLNTIMQEIDLLKNLNHKNIVKYLGSSKTKTHLHIILEYVENGSLANIIKPNKFGPFPESLVAVYIAQVLEGLVYLHEQGVIHRDIKGANILTTKEGLVKLADFGVATKLNEADVNTHSVVGTPYWMAPEVIEMSGVCAASDIWSVGCTVIELLTCVPPYYDLQPMPALFRIVQDDNPPIPDSLSPDITDFLRQCFKKDSRQRPDAKTLLSHPWIRNSRRALQSSLRHSGTIKYMKEATASSEKDDEGSQDAAESLSGENVGISKTDSKSKLPLVGVSSFRSEKDQSTPSDLGEEGTDNSEDDIMSDQVPTLSIHEKSSDAKGTPQDVSDFHGKSERGETPENLVTETSEARKNTSAIKHVGKELSIPVDQTSHSFGRKGEERGIRKAVKTPSSVSGNELARFSDPPGDASLHDLFHPLDKVSEGKPNEASTSMPTSNVNQGDSPVADGGKNDLATKLRATIAQKQMEGETGHSNDGGDLFRLMMGVLKDDVIDIDGLVFDEKVPAENLFPLQAVEFSRLVSSLRPDESEDAIVSSCQKLVAMFRQRPEQKVVFVTQHGFLPLMDLLDIPKSRVICAVLQLINEIIKDNTDFQENACLVGLIPVVMSFAGPERDRSREIRKEAAYFLQQLCQSSPLTLQMFIACRGIPVLVGFLEADYAKYREMVHLAIDGMWQVFKLKRSTPRNDFCRIAAKNGILLRLINTLYSLNEATRLASISGGLDGQAPRVRSGQLDPNNPIFGQNETSSLSMIDQPDVLKTRHGGGEEPSHASTSNSQRSDVHQPDALHPDGDKPRVSSVAPDASTSGTEDVRQQHRISLSANRTSTDKLQKLAEGASNGFPVTQTEQVRPLLSLLDKEPPSRHYSGQLDYVKHITGIERHESRLPLLHGSNEKKNNGDLDFLMAEFAEVSGRGKENGSLDTTTRYPSKTMTKKVLAIEGVASTSGIASQTASGVLSGSGVLNARPGSATSSGLLAHMVSTLSADVAREYLEKVADLLLEFARADTTVKSYMCSQSLLSRLFQMFNRVEPPILLKILECTNHLSTDPNCLENLQRADAIKHLIPNLELKDGHLVYQIHHEVLSALFNLCKINKRRQEQAAENGIIPHLMLFIMSDSPLKQYALPLLCDMAHASRNSREQLRAHGGLDVYLSLLDDEYWSVIALDSIAVCLAQDNDNRKVEQALLKQDAIQKLVDFFQSCPERHFVHILEPFLKIITKSYRINKTLAVNGLTPLLISRLDHQDAIARLNLLKLIKAVYEHHPRPKQLIVENDLPQKLQNLIEERRDGQRSGGQVLVKQMATSLLKALHINTIL.

Residues 20 to 274 enclose the Protein kinase domain; that stretch reads YMLGDEIGKG…AKTLLSHPWI (255 aa). HEAT repeat units lie at residues 25–62 and 86–125; these read EIGK…EDLN and SKTK…AVYI. ATP-binding positions include 26–34 and K49; that span reads IGKGAYGRV. D144 (proton acceptor) is an active-site residue. The HEAT 3 repeat unit spans residues 218–256; that stretch reads PYYDLQPMPALFRIVQDDNPPIPDSLSPDITDFLRQCFK. 2 disordered regions span residues 296–415 and 430–507; these read EATA…KNTS and QTSH…PVAD. The segment covering 351 to 364 has biased composition (acidic residues); sequence LGEEGTDNSEDDIM. Basic and acidic residues-rich tracts occupy residues 388–399 and 470–486; these read SDFHGKSERGET and SLHD…EGKP. Residues 488-502 show a composition bias toward polar residues; sequence EASTSMPTSNVNQGD. HEAT repeat units lie at residues 533–571, 628–653, 654–695, 699–737, and 750–788; these read SNDG…LFPL, IPKS…DFQE, NACL…SSPL, MFIA…VFKL, and AAKN…RVRS. The segment at 777–883 is disordered; that stretch reads GGLDGQAPRV…ISLSANRTST (107 aa). The segment covering 791 to 808 has biased composition (polar residues); that stretch reads LDPNNPIFGQNETSSLSM. 2 stretches are compositionally biased toward basic and acidic residues: residues 813–826 and 836–852; these read DVLK…EEPS and SDVH…DKPR. HEAT repeat units follow at residues 903–940, 1025–1063, 1067–1105, 1112–1150, 1154–1191, 1196–1234, 1258–1281, 1282–1318, and 1348–1368; these read EQVR…HESR, ATSS…ADTT, YMCS…DPNC, ADAI…INKR, QAAE…ASRN, LRAH…DNRK, RHFV…NKTL, AVNG…HHPR, and QVLV…NTIL.

It belongs to the protein kinase superfamily. Ser/Thr protein kinase family. In terms of assembly, interacts with SGP1. Post-translationally, autophosphorylated. Expressed in both the sporophytic and the gametophytic tissues, especially in dividing cells. Mostly present in flower buds and mature flowers. Also accumulates in embryos, in roots apices, trichomes and ovule integuments.

The protein resides in the cytoplasm. Its subcellular location is the cytoskeleton. It is found in the microtubule organizing center. The protein localises to the nucleus. It localises to the nucleolus. The protein resides in the cell membrane. The catalysed reaction is L-seryl-[protein] + ATP = O-phospho-L-seryl-[protein] + ADP + H(+). It carries out the reaction L-threonyl-[protein] + ATP = O-phospho-L-threonyl-[protein] + ADP + H(+). Functionally, serine/threonine-protein kinase involved in the spatial and temporal control system organizing cortical activities in mitotic and postmitotic cells. Required for the normal functioning of the plasma membrane in developing pollen. Involved in the regulation of cell expansion, cell elongation, and embryo development. In Arabidopsis thaliana (Mouse-ear cress), this protein is MAP3K epsilon protein kinase 1.